A 627-amino-acid chain; its full sequence is Sodium- and chloride-dependent GABA transporter 3 (627 aa).

Residues 1–36 (MTAEQALPLGNGKAAEEARGSEALGGGGGGAAGTRE) form a disordered region. Over 1–53 (MTAEQALPLGNGKAAEEARGSEALGGGGGGAAGTREARDKAVHERGHWNNKVE) the chain is Cytoplasmic. Position 21 is a phosphoserine (serine 21). Residues 23–32 (ALGGGGGGAA) are compositionally biased toward gly residues. 3 helical membrane-spanning segments follow: residues 54–74 (FVLSVAGEIIGLGNVWRFPYL), 82–101 (AFLIPYVVFFICCGIPVFFL), and 126–146 (GIGYATQVIEAHLNVYYIIIL). The Extracellular segment spans residues 147–220 (AWAIFYLSNC…DGIEHIGNLR (74 aa)). 3 N-linked (GlcNAc...) asparagine glycosylation sites follow: asparagine 182, asparagine 185, and asparagine 193. The next 9 helical transmembrane spans lie at 221-239 (WELALCLLAAWTICYFCIW), 248-265 (VVYVTATFPYIMLLILLI), 301-318 (IFFSYAICLGCLTALGSY), 330-351 (IMLCCLNSGTSFVAGFAIFSVL), 384-403 (MPLSPLWATLFFMMLIFLGL), 433-451 (LLILALSIVSYFLGLVMLT), 468-488 (GMCLLFVAIFECVCIGWVYGS), 509-528 (WCWKVVTPGICAGIFIFFLV), and 548-566 (IGWLMALSSMLCIPLWIFI). The Cytoplasmic segment spans residues 567 to 627 (KLWKTEGTLP…SAITEKETHF (61 aa)).

It belongs to the sodium:neurotransmitter symporter (SNF) (TC 2.A.22) family. SLC6A11 subfamily. In terms of tissue distribution, brain and retina. Expressed predominantly within neurons. Expressed in the hippocampus (at protein level).

The protein resides in the cell membrane. It carries out the reaction 4-aminobutanoate(out) + chloride(out) + 2 Na(+)(out) = 4-aminobutanoate(in) + chloride(in) + 2 Na(+)(in). The catalysed reaction is taurine(out) + chloride(out) + 2 Na(+)(out) = taurine(in) + chloride(in) + 2 Na(+)(in). It catalyses the reaction beta-alanine(out) + chloride(out) + 2 Na(+)(out) = beta-alanine(in) + chloride(in) + 2 Na(+)(in). The enzyme catalyses hypotaurine(out) + chloride(out) + 2 Na(+)(out) = hypotaurine(in) + chloride(in) + 2 Na(+)(in). GABA transport is inhibited by beta-alanine. Functionally, mediates sodium- and chloride-dependent transport of gamma-aminobutyric acid (GABA). Can also mediate transport of beta-alanine and to a lower extent that of taurine and hypotaurine. The chain is Sodium- and chloride-dependent GABA transporter 3 (Slc6a11) from Rattus norvegicus (Rat).